A 127-amino-acid polypeptide reads, in one-letter code: Large ribosomal subunit protein bL12 (127 aa).

Positions 98–127 (PKPIKEGAPKAEAESLKSKLEEAGAEVELK) are disordered.

It belongs to the bacterial ribosomal protein bL12 family. In terms of assembly, homodimer. Part of the ribosomal stalk of the 50S ribosomal subunit. Forms a multimeric L10(L12)X complex, where L10 forms an elongated spine to which 2 to 4 L12 dimers bind in a sequential fashion. Binds GTP-bound translation factors.

In terms of biological role, forms part of the ribosomal stalk which helps the ribosome interact with GTP-bound translation factors. Is thus essential for accurate translation. The chain is Large ribosomal subunit protein bL12 from Amoebophilus asiaticus (strain 5a2).